Here is a 189-residue protein sequence, read N- to C-terminus: Elongation factor P (189 aa).

N6-(3,6-diaminohexanoyl)-5-hydroxylysine is present on lysine 34.

This sequence belongs to the elongation factor P family. Post-translationally, may be beta-lysylated on the epsilon-amino group of Lys-34 by the combined action of EpmA and EpmB, and then hydroxylated on the C5 position of the same residue by EpmC (if this protein is present). Lysylation is critical for the stimulatory effect of EF-P on peptide-bond formation. The lysylation moiety may extend toward the peptidyltransferase center and stabilize the terminal 3-CCA end of the tRNA. Hydroxylation of the C5 position on Lys-34 may allow additional potential stabilizing hydrogen-bond interactions with the P-tRNA.

It is found in the cytoplasm. It functions in the pathway protein biosynthesis; polypeptide chain elongation. Involved in peptide bond synthesis. Alleviates ribosome stalling that occurs when 3 or more consecutive Pro residues or the sequence PPG is present in a protein, possibly by augmenting the peptidyl transferase activity of the ribosome. Modification of Lys-34 is required for alleviation. This Alkalilimnicola ehrlichii (strain ATCC BAA-1101 / DSM 17681 / MLHE-1) protein is Elongation factor P.